Reading from the N-terminus, the 249-residue chain is Ribosomal RNA small subunit methyltransferase J (249 aa).

S-adenosyl-L-methionine is bound by residues 101–102, 117–118, and Asp-171; these read RD and ER.

The protein belongs to the methyltransferase superfamily. RsmJ family.

It is found in the cytoplasm. The enzyme catalyses guanosine(1516) in 16S rRNA + S-adenosyl-L-methionine = N(2)-methylguanosine(1516) in 16S rRNA + S-adenosyl-L-homocysteine + H(+). Functionally, specifically methylates the guanosine in position 1516 of 16S rRNA. The polypeptide is Ribosomal RNA small subunit methyltransferase J (Tolumonas auensis (strain DSM 9187 / NBRC 110442 / TA 4)).